The chain runs to 92 residues: MTRSLKKNPFVAKHLLRKIEKLNTKAEKEIIITWSRASTIIPTMIGHTIAIHNGREHLPVYIIDLMVGHKLGEFSPTINFRGHAKNDNRSRR.

It belongs to the universal ribosomal protein uS19 family.

It localises to the plastid. Its subcellular location is the chloroplast. Functionally, protein S19 forms a complex with S13 that binds strongly to the 16S ribosomal RNA. The polypeptide is Small ribosomal subunit protein uS19c (Nasturtium officinale (Watercress)).